Consider the following 144-residue polypeptide: Large ribosomal subunit protein uL15 (144 aa).

The segment at 1–49 (MRLNTLSPAAGSKSAPKRVGRGIGSGLGKTAGRGHKGQKSRSGGGVRVG) is disordered. The segment covering 21–31 (RGIGSGLGKTA) has biased composition (gly residues).

It belongs to the universal ribosomal protein uL15 family. As to quaternary structure, part of the 50S ribosomal subunit.

Functionally, binds to the 23S rRNA. This chain is Large ribosomal subunit protein uL15, found in Shewanella frigidimarina (strain NCIMB 400).